The primary structure comprises 87 residues: Protein Isd11 (87 aa).

Belongs to the complex I LYR family. Interacts with IscS; the interaction enhances cysteine desulfurase activity of IscS. Component of a complex, at least composed of IscS, Isd11 and IscU.

It is found in the mitochondrion. It participates in cofactor biosynthesis; iron-sulfur cluster biosynthesis. In terms of biological role, participates in iron-sulfur cluster formation (ISC) pathway for iron-sulfur (Fe-S) cluster biogenesis. Enhances cysteine desulfurase activity of IscS. The sequence is that of Protein Isd11 from Plasmodium falciparum (isolate 3D7).